Consider the following 1079-residue polypeptide: Eukaryotic translation initiation factor 5B (1079 aa).

The interval 1 to 478 is disordered; that stretch reads MGKKGKKSGY…QAAPAESNVS (478 aa). Polar residues predominate over residues 22–38; it reads SGQNEYLDNTSQDSPQN. The segment covering 57–67 has biased composition (basic residues); that stretch reads SKKKKGKKNKG. Phosphoserine is present on residues S73, S77, and S82. Over residues 105–114 the composition is skewed to basic residues; sequence KKGKKGKKSK. S127 carries the post-translational modification Phosphoserine. Residues 160–169 are compositionally biased toward low complexity; the sequence is NNNESEAAAP. Over residues 173-192 the composition is skewed to basic and acidic residues; the sequence is PEVRVKTKKEKEREKKEREK. A compositionally biased stretch (basic residues) spans 193–204; that stretch reads LRKKQQQAKKKG. Residues 207–233 are compositionally biased toward polar residues; it reads GEDTLASSEVSSEVDISTPAENDSSAK. The segment covering 253–293 has biased composition (basic and acidic residues); the sequence is MLEEKRAREEEEQRIREEEARIAEEEKRLAEVEEARKEEAR. Low complexity-rich tracts occupy residues 321 to 334 and 361 to 376; these read QQAL…QMLE and RSGT…LESS. Residue T364 is modified to Phosphothreonine. Over residues 385–408 the composition is skewed to basic and acidic residues; it reads EPQKDSKDDSEKVEKETEVERKEE. Residues 409–431 are compositionally biased toward acidic residues; that stretch reads NEAEAEAVFDDWEAALEEPEVAE. Positions 436 to 466 are enriched in basic and acidic residues; that stretch reads VTEKKETDIKSDAVEHSIKDKEDSKTDKVDD. The region spanning 482–700 is the tr-type G domain; the sequence is LRSPICCILG…LISLTQTRMS (219 aa). Positions 491–498 are G1; sequence GHVDTGKT. Residue 491–498 coordinates GTP; the sequence is GHVDTGKT. Positions 516-520 are G2; it reads GITQQ. Positions 555 to 558 are G3; it reads DTPG. A G4 region spans residues 609-612; it reads NKVD. Residues 677-679 form a G5 region; the sequence is SAQ.

Belongs to the TRAFAC class translation factor GTPase superfamily. Classic translation factor GTPase family. IF-2 subfamily. The cofactor is a monovalent cation.

It is found in the cytoplasm. The enzyme catalyses GTP + H2O = GDP + phosphate + H(+). Plays a role in translation initiation. Translational GTPase that catalyzes the joining of the 40S and 60S subunits to form the 80S initiation complex with the initiator methionine-tRNA in the P-site base paired to the start codon. GTP binding and hydrolysis induces conformational changes in the enzyme that renders it active for productive interactions with the ribosome. The release of the enzyme after formation of the initiation complex is a prerequisite to form elongation-competent ribosomes. This chain is Eukaryotic translation initiation factor 5B, found in Schizosaccharomyces pombe (strain 972 / ATCC 24843) (Fission yeast).